Reading from the N-terminus, the 182-residue chain is Hypoxanthine/guanine phosphoribosyltransferase (182 aa).

This sequence belongs to the purine/pyrimidine phosphoribosyltransferase family. Archaeal HPRT subfamily. Homodimer.

The protein resides in the cytoplasm. The catalysed reaction is IMP + diphosphate = hypoxanthine + 5-phospho-alpha-D-ribose 1-diphosphate. The enzyme catalyses GMP + diphosphate = guanine + 5-phospho-alpha-D-ribose 1-diphosphate. It functions in the pathway purine metabolism; IMP biosynthesis via salvage pathway; IMP from hypoxanthine: step 1/1. Functionally, catalyzes a salvage reaction resulting in the formation of IMP that is energically less costly than de novo synthesis. The chain is Hypoxanthine/guanine phosphoribosyltransferase from Methanosphaerula palustris (strain ATCC BAA-1556 / DSM 19958 / E1-9c).